A 194-amino-acid polypeptide reads, in one-letter code: dITP/XTP pyrophosphatase (194 aa).

8-13 (TKNKGK) is a binding site for substrate. Positions 41 and 70 each coordinate Mg(2+). The active-site Proton acceptor is the aspartate 70. Substrate contacts are provided by residues serine 71, 153–156 (FGYD), lysine 176, and 181–182 (HR).

Belongs to the HAM1 NTPase family. As to quaternary structure, homodimer. It depends on Mg(2+) as a cofactor.

It catalyses the reaction XTP + H2O = XMP + diphosphate + H(+). The catalysed reaction is dITP + H2O = dIMP + diphosphate + H(+). The enzyme catalyses ITP + H2O = IMP + diphosphate + H(+). Its function is as follows. Pyrophosphatase that catalyzes the hydrolysis of nucleoside triphosphates to their monophosphate derivatives, with a high preference for the non-canonical purine nucleotides XTP (xanthosine triphosphate), dITP (deoxyinosine triphosphate) and ITP. Seems to function as a house-cleaning enzyme that removes non-canonical purine nucleotides from the nucleotide pool, thus preventing their incorporation into DNA/RNA and avoiding chromosomal lesions. The protein is dITP/XTP pyrophosphatase of Halalkalibacterium halodurans (strain ATCC BAA-125 / DSM 18197 / FERM 7344 / JCM 9153 / C-125) (Bacillus halodurans).